We begin with the raw amino-acid sequence, 147 residues long: Large ribosomal subunit protein bL9 (147 aa).

Belongs to the bacterial ribosomal protein bL9 family.

Its function is as follows. Binds to the 23S rRNA. The protein is Large ribosomal subunit protein bL9 of Bacteroides fragilis (strain YCH46).